We begin with the raw amino-acid sequence, 185 residues long: Ribosome-recycling factor (185 aa).

This sequence belongs to the RRF family.

The protein localises to the cytoplasm. Responsible for the release of ribosomes from messenger RNA at the termination of protein biosynthesis. May increase the efficiency of translation by recycling ribosomes from one round of translation to another. The sequence is that of Ribosome-recycling factor from Geobacillus kaustophilus (strain HTA426).